Here is a 937-residue protein sequence, read N- to C-terminus: Isoleucine--tRNA ligase (937 aa).

A 'HIGH' region motif is present at residues 58-68; the sequence is PYANGTLHLGH. Glu561 contacts L-isoleucyl-5'-AMP. Residues 602–606 carry the 'KMSKS' region motif; sequence KMSKS. Lys605 is a binding site for ATP. Residues Cys900, Cys903, Cys920, and Cys923 each contribute to the Zn(2+) site.

The protein belongs to the class-I aminoacyl-tRNA synthetase family. IleS type 1 subfamily. Monomer. The cofactor is Zn(2+).

Its subcellular location is the cytoplasm. The catalysed reaction is tRNA(Ile) + L-isoleucine + ATP = L-isoleucyl-tRNA(Ile) + AMP + diphosphate. Its function is as follows. Catalyzes the attachment of isoleucine to tRNA(Ile). As IleRS can inadvertently accommodate and process structurally similar amino acids such as valine, to avoid such errors it has two additional distinct tRNA(Ile)-dependent editing activities. One activity is designated as 'pretransfer' editing and involves the hydrolysis of activated Val-AMP. The other activity is designated 'posttransfer' editing and involves deacylation of mischarged Val-tRNA(Ile). The polypeptide is Isoleucine--tRNA ligase (Histophilus somni (strain 2336) (Haemophilus somnus)).